The following is a 335-amino-acid chain: Beta-ketoacyl-[acyl-carrier-protein] synthase III (335 aa).

Active-site residues include C119 and H261. Residues 262–266 (QANQR) form an ACP-binding region. N291 is an active-site residue.

It belongs to the thiolase-like superfamily. FabH family. In terms of assembly, homodimer.

It localises to the cytoplasm. The enzyme catalyses malonyl-[ACP] + acetyl-CoA + H(+) = 3-oxobutanoyl-[ACP] + CO2 + CoA. It functions in the pathway lipid metabolism; fatty acid biosynthesis. Catalyzes the condensation reaction of fatty acid synthesis by the addition to an acyl acceptor of two carbons from malonyl-ACP. Catalyzes the first condensation reaction which initiates fatty acid synthesis and may therefore play a role in governing the total rate of fatty acid production. Possesses both acetoacetyl-ACP synthase and acetyl transacylase activities. Its substrate specificity determines the biosynthesis of branched-chain and/or straight-chain of fatty acids. The chain is Beta-ketoacyl-[acyl-carrier-protein] synthase III from Prochlorococcus marinus (strain MIT 9515).